The chain runs to 338 residues: Cytochrome c biogenesis protein CcsA (338 aa).

The next 8 membrane-spanning stretches (helical) occupy residues 15 to 35, 36 to 56, 71 to 91, 97 to 117, 142 to 162, 246 to 266, 273 to 293, and 307 to 327; these read FLVLFLTMLLYWGGAAFPNIP, GLTGLGTLGVAIANLCMATLL, LYESLFFLAWGVTTMHLVAEW, WVGVITAPVAMGITAFAALSL, VMMISYAALLVGSLLAIAFLI, IIGLGFPLLTIGIIAGAVWAN, WSWDPKETWALITWLVFAAYL, and AFLAAAGFFVVWVCYLGVNIL.

It belongs to the CcmF/CycK/Ccl1/NrfE/CcsA family. In terms of assembly, may interact with ccs1.

It localises to the cellular thylakoid membrane. In terms of biological role, required during biogenesis of c-type cytochromes (cytochrome c6 and cytochrome f) at the step of heme attachment. The chain is Cytochrome c biogenesis protein CcsA from Picosynechococcus sp. (strain ATCC 27264 / PCC 7002 / PR-6) (Agmenellum quadruplicatum).